We begin with the raw amino-acid sequence, 497 residues long: Cytochrome P450 71A12 (497 aa).

The chain crosses the membrane as a helical span at residues 4-24 (ILMVSLCLTTLITLFLLKQFL). C439 lines the heme pocket.

It belongs to the cytochrome P450 family. The cofactor is heme.

The protein resides in the membrane. Converts indole-3-acetaldoxime to indole cyanohydrin. Involved in the biosynthetic pathway to 4-hydroxyindole-3-carbonyl nitrile (4-OH-ICN), a cyanogenic metabolite required for inducible pathogen defense. In Arabidopsis thaliana (Mouse-ear cress), this protein is Cytochrome P450 71A12 (CYP71A12).